A 152-amino-acid polypeptide reads, in one-letter code: uncharacterized protein (152 aa).

A glycan (N-linked (GlcNAc...) asparagine; by host) is linked at Asn-2. Helical transmembrane passes span 5-25 (MILL…MNLW), 36-56 (LNDF…CYIL), and 68-88 (LIIT…QAFI). An N-linked (GlcNAc...) asparagine; by host glycan is attached at Asn-113.

The protein localises to the membrane. This is an uncharacterized protein from Acanthamoeba polyphaga mimivirus (APMV).